A 417-amino-acid chain; its full sequence is Serine hydroxymethyltransferase 2 (417 aa).

(6S)-5,6,7,8-tetrahydrofolate-binding positions include Leu121 and 125 to 127 (GHL). Lys229 is modified (N6-(pyridoxal phosphate)lysine). Residue 354-356 (SPF) participates in (6S)-5,6,7,8-tetrahydrofolate binding.

Belongs to the SHMT family. In terms of assembly, homodimer. The cofactor is pyridoxal 5'-phosphate.

Its subcellular location is the cytoplasm. It carries out the reaction (6R)-5,10-methylene-5,6,7,8-tetrahydrofolate + glycine + H2O = (6S)-5,6,7,8-tetrahydrofolate + L-serine. It functions in the pathway one-carbon metabolism; tetrahydrofolate interconversion. Its pathway is amino-acid biosynthesis; glycine biosynthesis; glycine from L-serine: step 1/1. Catalyzes the reversible interconversion of serine and glycine with tetrahydrofolate (THF) serving as the one-carbon carrier. This reaction serves as the major source of one-carbon groups required for the biosynthesis of purines, thymidylate, methionine, and other important biomolecules. Also exhibits THF-independent aldolase activity toward beta-hydroxyamino acids, producing glycine and aldehydes, via a retro-aldol mechanism. The chain is Serine hydroxymethyltransferase 2 from Pseudomonas fluorescens (strain Pf0-1).